The chain runs to 281 residues: Pantothenate synthetase (281 aa).

Residue 31–38 (MGNLHAGH) coordinates ATP. H38 (proton donor) is an active-site residue. Q62 lines the (R)-pantoate pocket. Q62 contacts beta-alanine. Residue 150–153 (GKKD) participates in ATP binding. Q156 serves as a coordination point for (R)-pantoate. ATP contacts are provided by residues V179 and 187 to 190 (MSSR).

It belongs to the pantothenate synthetase family. Homodimer.

The protein resides in the cytoplasm. The catalysed reaction is (R)-pantoate + beta-alanine + ATP = (R)-pantothenate + AMP + diphosphate + H(+). Its pathway is cofactor biosynthesis; (R)-pantothenate biosynthesis; (R)-pantothenate from (R)-pantoate and beta-alanine: step 1/1. Functionally, catalyzes the condensation of pantoate with beta-alanine in an ATP-dependent reaction via a pantoyl-adenylate intermediate. The sequence is that of Pantothenate synthetase from Xylella fastidiosa (strain 9a5c).